The primary structure comprises 451 residues: MKMERKNVWHHRKKEEIEAFSKEYMEFMSKAKTERMTVKEIKRILDESGFVPLEDFAGDPMNMTVYAVNRGKAIAAFRVVDDLKRGLNLVVAHIDSPRLDFKPNPLIEDEQIALFKTHYYGGIKKYHWLSIPLEIHGVLFKNDGTEIEIHIGDKPEDPVFTIPDLLPHLDKEDAKISEKFKGENLMLIAGTIPLSGEEKEAVKTNVLKILNEMYGITEEDFVSGEIEVVPAFSPREVGMDRSLIGAYGQDDRICAYTALRALLSANPEKSIGVIFFDKEEIGSDGNTGAKARFYLKALRQILKMQGAKDSEFVLDEVLENTSVISGDVCAAVNPPYKDVHDLHNAPKLGYGVALVKYTGARGKYSTNDAHAEFVARVRKVLNEQGVIWQVATLGKVDQGGGGTIAKFFAERGSDVIDMGPALLGMHSPFEISSKADLFETYVAYRSLMEKL.

Positions 93, 168, and 426 each coordinate Zn(2+).

This sequence belongs to the peptidase M18 family. It depends on Zn(2+) as a cofactor.

The sequence is that of Probable M18 family aminopeptidase 1 (apeA) from Thermotoga maritima (strain ATCC 43589 / DSM 3109 / JCM 10099 / NBRC 100826 / MSB8).